We begin with the raw amino-acid sequence, 494 residues long: Myocyte-specific enhancer factor 2A (494 aa).

The MADS-box domain occupies 3 to 57; sequence RKKIQITRIMDERNRQVTFTKRKFGLMKKAYELSVLCDCEIALIIFNSSNKLFQY. Residues 58-86 constitute a DNA-binding region (mef2-type); that stretch reads ASTDMDKVLLKYTEYNEPHESRTNSDIVE. S59 is subject to Phosphoserine; by CK2. 2 positions are modified to phosphoserine: S98 and S108. The segment covering 171–181 has biased composition (low complexity); that stretch reads TLTDSSMLSPP. A disordered region spans residues 171-218; the sequence is TLTDSSMLSPPQTTLHRNVSPGAPQRPPSTGNAGGMLSTTDLIVPNGA. Position 233 is a phosphoserine (S233). The interval 238–268 is disordered; the sequence is GATGANSLGKVMPTKSPPPPGGGNLGMNSRK. K247 bears the N6-acetyllysine mark. S253 carries the phosphoserine modification. Residues 264 to 281 form a required for interaction with MAPKs region; sequence MNSRKPDLRVVIPPSSKG. Phosphothreonine; by MAPK7 and MAPK14 occurs at positions 302 and 309. S345 carries the phosphoserine; by MAPK7 modification. Polar residues predominate over residues 380 to 392; it reads SNLSINTNQNINI. Positions 380–494 are disordered; sequence SNLSINTNQN…KRMRMDAWVT (115 aa). K393 is subject to N6-acetyllysine; alternate. Residue K393 forms a Glycyl lysine isopeptide (Lys-Gly) (interchain with G-Cter in SUMO); alternate linkage. At S398 the chain carries Phosphoserine; by CDK5. Position 405 is a phosphothreonine (T405). Residues 418 to 432 show a composition bias toward pro residues; that stretch reads QPPPPPPQPQPPQPQ. A Phosphoserine modification is found at S440. A compositionally biased stretch (low complexity) spans 440–453; it reads SPVDSLSSSSSSYD. Composition is skewed to basic and acidic residues over residues 454–464 and 475–494; these read GSDREDPRGDF and NTED…AWVT.

Binds DNA as a homo- or heterodimer. Dimerizes with MEF2D. Interacts with HDAC7. Interacts with PIAS1; the interaction enhances sumoylation. Interacts with HDAC4, HDAC9 and SLC2A4RG. Interacts (via the N-terminal) with MAPK7; the interaction results in the phosphorylation and transcriptional activity of MEF2A. In terms of processing, constitutive phosphorylation on Ser-398 promotes Lys-393 sumoylation thus preventing acetylation at this site. Dephosphorylation on Ser-398 by PPP3CA upon neuron depolarization promotes a switch from sumoylation to acetylation on residue Lys-393 leading to inhibition of dendrite claw differentiation. Phosphorylation on Thr-302 and Thr-309 are the main sites involved in p38 MAPK signaling and activate transcription. Phosphorylated on these sites by MAPK14/p38alpha and MAPK11/p38beta, but not by MAPK13/p38delta nor by MAPK12/p38gamma. Phosphorylation on Ser-398 by CDK5 induced by neurotoxicity inhibits MEF2A transcriptional activation leading to apoptosis of cortical neurons. Phosphorylation on Thr-302, Thr-309 and Ser-345 can be induced by EGF. Post-translationally, sumoylation on Lys-393 is enhanced by PIAS1 and represses transcriptional activity. Phosphorylation on Ser-398 is required for sumoylation. Has no effect on nuclear location nor on DNA binding. Sumoylated with SUMO1 and, to a lesser extent with SUMO2 and SUMO3. PIASx facilitates sumoylation in postsynaptic dendrites in the cerebellar cortex and promotes their morphogenesis. Acetylation on Lys-393 activates transcriptional activity. Acetylated by p300 on several sites in diffentiating myocytes. Acetylation on Lys-4 increases DNA binding and transactivation. Hyperacetylation by p300 leads to enhanced cardiac myocyte growth and heart failure. In terms of processing, proteolytically cleaved in cerebellar granule neurons on several sites by caspase 3 and caspase 7 following neurotoxicity. Preferentially cleaves the CDK5-mediated hyperphosphorylated form which leads to neuron apoptosis and transcriptional inactivation.

It localises to the nucleus. In terms of biological role, transcriptional activator which binds specifically to the MEF2 element, 5'-YTA[AT](4)TAR-3', found in numerous muscle-specific genes. Also involved in the activation of numerous growth factor- and stress-induced genes. Mediates cellular functions not only in skeletal and cardiac muscle development, but also in neuronal differentiation and survival. Plays diverse roles in the control of cell growth, survival and apoptosis via p38 MAPK signaling in muscle-specific and/or growth factor-related transcription. In cerebellar granule neurons, phosphorylated and sumoylated MEF2A represses transcription of NUR77 promoting synaptic differentiation. Associates with chromatin to the ZNF16 promoter. This is Myocyte-specific enhancer factor 2A (MEF2A) from Pongo abelii (Sumatran orangutan).